The chain runs to 606 residues: Gamma-aminobutyric acid receptor subunit beta (606 aa).

A signal peptide spans 1-44 (MSDSKMDKLARMAPLPRTPLLTIWLAINMALIAQETGHKRIHTV). Residues 45 to 268 (QAATGGGSML…CEIQFVRSMG (224 aa)) are Extracellular-facing. A glycan (N-linked (GlcNAc...) asparagine) is linked at Asn-58. A disulfide bridge connects residues Cys-185 and Cys-199. Asn-253 is a glycosylation site (N-linked (GlcNAc...) asparagine). Transmembrane regions (helical) follow at residues 269–291 (YYLI…SFWL), 297–316 (PARV…LMSS), and 333–356 (YLGT…YMAK). Residues 357 to 568 (RIQMRKQRFM…LGITPSDIDK (212 aa)) are Cytoplasmic-facing. Disordered regions lie at residues 376–451 (KQQL…VSNR) and 482–542 (HDPK…AAVP). Residues 381 to 395 (GANQQQANPNPNANV) show a composition bias toward low complexity. Gly residues predominate over residues 396–425 (GGPGGVGVGPGGPGGPGGGVNVGVGMGMGP). Over residues 430 to 443 (GHGHHAHSHGHPHA) the composition is skewed to basic residues. The span at 499 to 536 (GGRGGPQSHGPGPGQGGGPPGGGGGGGGGGGPPEGGGD) shows a compositional bias: gly residues. Residues 569-590 (YSRIVFPVCFVCFNLMYWIIYL) form a helical membrane-spanning segment.

The protein belongs to the ligand-gated ion channel (TC 1.A.9) family. Gamma-aminobutyric acid receptor (TC 1.A.9.5) subfamily.

Its subcellular location is the postsynaptic cell membrane. It is found in the cell membrane. Functionally, GABA, an inhibitory neurotransmitter, mediates neuronal inhibition by binding to the GABA receptor and opening an integral chloride channel. The sequence is that of Gamma-aminobutyric acid receptor subunit beta (Rdl) from Drosophila simulans (Fruit fly).